The following is a 283-amino-acid chain: DegV domain-containing protein lin2658 (283 aa).

The 278-residue stretch at 5 to 282 (IAVVTDSTTY…EGALGLTWSI (278 aa)) folds into the DegV domain. Residues serine 63 and serine 96 each contribute to the hexadecanoate site.

Its function is as follows. May bind long-chain fatty acids, such as palmitate, and may play a role in lipid transport or fatty acid metabolism. This Listeria innocua serovar 6a (strain ATCC BAA-680 / CLIP 11262) protein is DegV domain-containing protein lin2658.